The sequence spans 716 residues: Mitochondrial Rho GTPase 1 (716 aa).

The Cytoplasmic segment spans residues 1 to 692 (MSPDAIRVVV…VSVDQDDIKH (692 aa)). One can recognise a Miro 1 domain in the interval 3-224 (PDAIRVVVCG…FYLCQRAVTH (222 aa)). Positions 58 to 99 (NDQDHHHHHQSSPSTMKNKRKHNNKRERERERESSINNVQPN) are disordered. GTP is bound by residues 84-91 (ERERERES), 113-115 (DTS), and 167-170 (NKSD). Positions 240–275 (GAIKPLKRIFWLSDTDQDGYLNFEELSELHKKCFGI) constitute an EF-hand 1 domain. 5 residues coordinate Ca(2+): Asp253, Asp255, Asp257, Tyr259, and Glu264. Residues 303–327 (TQTPPQQQHLATSAGTPNGTTTTTS) are disordered. One can recognise an EF-hand 2 domain in the interval 388–423 (TGYKFFVDLFIKFDKDNDGGLNEDELNTLFRSTPGI). 4 residues coordinate Ca(2+): Asp401, Asp403, Asp405, and Glu412. The region spanning 505 to 671 (RNVFNCFIVG…FIQLVDAAKT (167 aa)) is the Miro 2 domain. Residues 514–521 (GAPKAGKS), 550–554 (ELRGG), and 620–623 (LKAD) each bind GTP. A helical; Anchor for type IV membrane protein membrane pass occupies residues 693-713 (IIMTGAAIAVVGLVSIWVLNS). Residues 714 to 716 (LRR) lie on the Mitochondrial intermembrane side of the membrane.

The protein belongs to the mitochondrial Rho GTPase family.

It is found in the mitochondrion outer membrane. Its function is as follows. Mitochondrial GTPase involved in mitochondrial trafficking. Probably involved in control of anterograde transport of mitochondria and their subcellular distribution. In Candida albicans (strain SC5314 / ATCC MYA-2876) (Yeast), this protein is Mitochondrial Rho GTPase 1 (GEM1).